The sequence spans 357 residues: ATP-dependent 6-phosphofructokinase (357 aa).

ATP-binding positions include Gly12, 80–81 (KG), and 107–110 (GDGS). Asp108 is a binding site for Mg(2+). Residues 131-133 (TID), Arg168, 175-177 (MGR), Glu229, Arg272, and 278-281 (HIQR) contribute to the substrate site. Asp133 acts as the Proton acceptor in catalysis.

This sequence belongs to the phosphofructokinase type A (PFKA) family. Mixed-substrate PFK group III subfamily. In terms of assembly, homodimer or homotetramer. Requires Mg(2+) as cofactor.

The protein resides in the cytoplasm. It catalyses the reaction beta-D-fructose 6-phosphate + ATP = beta-D-fructose 1,6-bisphosphate + ADP + H(+). It functions in the pathway carbohydrate degradation; glycolysis; D-glyceraldehyde 3-phosphate and glycerone phosphate from D-glucose: step 3/4. With respect to regulation, subject to allosteric activation by ADP and other diphosphonucleosides, and inhibition by phosphoenolpyruvate. Functionally, catalyzes the phosphorylation of D-fructose 6-phosphate to fructose 1,6-bisphosphate by ATP, the first committing step of glycolysis. This is ATP-dependent 6-phosphofructokinase from Trichormus variabilis (strain ATCC 29413 / PCC 7937) (Anabaena variabilis).